Here is a 315-residue protein sequence, read N- to C-terminus: Bifunctional protein FolD (315 aa).

NADP(+)-binding positions include 166–168 (GRS), Ser-193, and Ile-234.

It belongs to the tetrahydrofolate dehydrogenase/cyclohydrolase family. Homodimer.

It carries out the reaction (6R)-5,10-methylene-5,6,7,8-tetrahydrofolate + NADP(+) = (6R)-5,10-methenyltetrahydrofolate + NADPH. It catalyses the reaction (6R)-5,10-methenyltetrahydrofolate + H2O = (6R)-10-formyltetrahydrofolate + H(+). It participates in one-carbon metabolism; tetrahydrofolate interconversion. In terms of biological role, catalyzes the oxidation of 5,10-methylenetetrahydrofolate to 5,10-methenyltetrahydrofolate and then the hydrolysis of 5,10-methenyltetrahydrofolate to 10-formyltetrahydrofolate. This Treponema pallidum (strain Nichols) protein is Bifunctional protein FolD.